The primary structure comprises 464 residues: tRNA modification GTPase MnmE (464 aa).

(6S)-5-formyl-5,6,7,8-tetrahydrofolate is bound by residues R23, E84, and R123. The TrmE-type G domain maps to 216–386 (GARATLVGRP…LGATVARLLL (171 aa)). Residue N226 coordinates K(+). Residues 226-231 (NAGKSS), 245-251 (TPIPGTT), and 270-273 (DTAG) each bind GTP. S230 contributes to the Mg(2+) binding site. 3 residues coordinate K(+): T245, I247, and T250. T251 contributes to the Mg(2+) binding site. Residue K464 coordinates (6S)-5-formyl-5,6,7,8-tetrahydrofolate.

The protein belongs to the TRAFAC class TrmE-Era-EngA-EngB-Septin-like GTPase superfamily. TrmE GTPase family. As to quaternary structure, homodimer. Heterotetramer of two MnmE and two MnmG subunits. K(+) is required as a cofactor.

The protein localises to the cytoplasm. Functionally, exhibits a very high intrinsic GTPase hydrolysis rate. Involved in the addition of a carboxymethylaminomethyl (cmnm) group at the wobble position (U34) of certain tRNAs, forming tRNA-cmnm(5)s(2)U34. The chain is tRNA modification GTPase MnmE from Roseiflexus castenholzii (strain DSM 13941 / HLO8).